A 204-amino-acid polypeptide reads, in one-letter code: MKLYTKPGACSLADHIVLRWSCLPFELTVVDAATMKSPDYLRLNPAGAVPLLVVDQWALTQNAAILNYIADTAPLTGLGGDGTARSRAEINRWIAFVNADLHPTFKPLFGSTAYLQEDALIQRSHEDARTKLRTLYTRVDAHLQGRNWLAGDTHTGADAYLFVTLRWAHKAGVDLSGLSALDAFFQRMLADADVQAALQAEGLN.

Residues 1–77 (MKLYTKPGAC…YIADTAPLTG (77 aa)) form the GST N-terminal domain. Glutathione-binding positions include Cys10, Val49, 61 to 62 (QN), and His102. Residues 83-204 (TARSRAEINR…QAALQAEGLN (122 aa)) form the GST C-terminal domain.

Belongs to the GST superfamily. In terms of assembly, homodimer.

It localises to the cytoplasm. The enzyme catalyses RX + glutathione = an S-substituted glutathione + a halide anion + H(+). Its function is as follows. Conjugation of reduced glutathione to a wide number of exogenous and endogenous hydrophobic electrophiles. This chain is Glutathione S-transferase GST-4.5 (gst), found in Xanthomonas campestris pv. campestris (strain ATCC 33913 / DSM 3586 / NCPPB 528 / LMG 568 / P 25).